The chain runs to 152 residues: Transcriptional regulator MraZ (152 aa).

SpoVT-AbrB domains follow at residues 5-52 (ATLV…PLPE) and 81-124 (ASEC…DETT).

The protein belongs to the MraZ family. In terms of assembly, forms oligomers.

It is found in the cytoplasm. The protein localises to the nucleoid. Functionally, negatively regulates its own expression and that of the subsequent genes in the proximal part of the division and cell wall (dcw) gene cluster. Acts by binding directly to DNA. May also regulate the expression of genes outside the dcw cluster. This Shigella dysenteriae serotype 1 (strain Sd197) protein is Transcriptional regulator MraZ.